Here is a 259-residue protein sequence, read N- to C-terminus: 5'-nucleotidase SurE (259 aa).

A divalent metal cation-binding residues include aspartate 8, aspartate 9, serine 40, and asparagine 92.

The protein belongs to the SurE nucleotidase family. The cofactor is a divalent metal cation.

The protein resides in the cytoplasm. The catalysed reaction is a ribonucleoside 5'-phosphate + H2O = a ribonucleoside + phosphate. Nucleotidase that shows phosphatase activity on nucleoside 5'-monophosphates. The polypeptide is 5'-nucleotidase SurE (Xanthomonas euvesicatoria pv. vesicatoria (strain 85-10) (Xanthomonas campestris pv. vesicatoria)).